The chain runs to 583 residues: Pectinesterase/pectinesterase inhibitor U1 (583 aa).

Positions 1-40 (MTRVEDFFSKQIDFCKRKKKIYLAIVASVLLVAAVIGVVA) are cleaved as a signal peptide. A pectinesterase inhibitor U1 region spans residues 60-221 (SSAHAIVKSA…EKMCSNALAM (162 aa)). N85, N105, and N224 each carry an N-linked (GlcNAc...) asparagine glycan. Positions 272 to 570 (DVVVAADGSG…TPGRFIAGGS (299 aa)) are pectinesterase U1. Substrate is bound by residues T347 and Q377. The active-site Proton donor; for pectinesterase activity is the D400. A disulfide bond links C414 and C434. D421 functions as the Nucleophile; for pectinesterase activity in the catalytic mechanism. Substrate-binding residues include R489 and W491.

This sequence in the N-terminal section; belongs to the PMEI family. The protein in the C-terminal section; belongs to the pectinesterase family.

It localises to the secreted. The protein localises to the cell wall. It catalyses the reaction [(1-&gt;4)-alpha-D-galacturonosyl methyl ester](n) + n H2O = [(1-&gt;4)-alpha-D-galacturonosyl](n) + n methanol + n H(+). The protein operates within glycan metabolism; pectin degradation; 2-dehydro-3-deoxy-D-gluconate from pectin: step 1/5. Acts in the modification of cell walls via demethylesterification of cell wall pectin. The chain is Pectinesterase/pectinesterase inhibitor U1 (PMEU1) from Solanum lycopersicum (Tomato).